Consider the following 1058-residue polypeptide: Carbamoyl phosphate synthase large chain (1058 aa).

The segment at 1 to 401 (MPKRKDIQKI…SLLKACRSLE (401 aa)) is carboxyphosphate synthetic domain. ATP is bound by residues arginine 129, arginine 169, glycine 175, glycine 176, arginine 208, isoleucine 210, glutamate 215, glycine 241, isoleucine 242, histidine 243, glutamine 284, and glutamate 298. The 195-residue stretch at 133 to 327 (KQLMQELDQP…IAKLAAKIAV (195 aa)) folds into the ATP-grasp 1 domain. Mg(2+) is bound by residues glutamine 284, glutamate 298, and asparagine 300. Glutamine 284, glutamate 298, and asparagine 300 together coordinate Mn(2+). An oligomerization domain region spans residues 402–546 (IGVCHNEMTS…YSTYELENES (145 aa)). The segment at 547-929 (VQSNKESILV…ALYKAFEANN (383 aa)) is carbamoyl phosphate synthetic domain. Residues 671 to 861 (EKALKELGIP…MAQIATKLIL (191 aa)) enclose the ATP-grasp 2 domain. ATP-binding residues include arginine 707, serine 746, isoleucine 748, glutamate 752, glycine 777, valine 778, histidine 779, serine 780, glutamine 820, and glutamate 832. Mg(2+) is bound by residues glutamine 820, glutamate 832, and asparagine 834. 3 residues coordinate Mn(2+): glutamine 820, glutamate 832, and asparagine 834. The region spanning 930–1058 (SHLSEFGQIV…ESRCFNIEAI (129 aa)) is the MGS-like domain. The tract at residues 930–1058 (SHLSEFGQIV…ESRCFNIEAI (129 aa)) is allosteric domain.

This sequence belongs to the CarB family. Composed of two chains; the small (or glutamine) chain promotes the hydrolysis of glutamine to ammonia, which is used by the large (or ammonia) chain to synthesize carbamoyl phosphate. Tetramer of heterodimers (alpha,beta)4. Requires Mg(2+) as cofactor. The cofactor is Mn(2+).

The enzyme catalyses hydrogencarbonate + L-glutamine + 2 ATP + H2O = carbamoyl phosphate + L-glutamate + 2 ADP + phosphate + 2 H(+). It carries out the reaction hydrogencarbonate + NH4(+) + 2 ATP = carbamoyl phosphate + 2 ADP + phosphate + 2 H(+). It participates in amino-acid biosynthesis; L-arginine biosynthesis; carbamoyl phosphate from bicarbonate: step 1/1. It functions in the pathway pyrimidine metabolism; UMP biosynthesis via de novo pathway; (S)-dihydroorotate from bicarbonate: step 1/3. Functionally, large subunit of the glutamine-dependent carbamoyl phosphate synthetase (CPSase). CPSase catalyzes the formation of carbamoyl phosphate from the ammonia moiety of glutamine, carbonate, and phosphate donated by ATP, constituting the first step of 2 biosynthetic pathways, one leading to arginine and/or urea and the other to pyrimidine nucleotides. The large subunit (synthetase) binds the substrates ammonia (free or transferred from glutamine from the small subunit), hydrogencarbonate and ATP and carries out an ATP-coupled ligase reaction, activating hydrogencarbonate by forming carboxy phosphate which reacts with ammonia to form carbamoyl phosphate. This is Carbamoyl phosphate synthase large chain from Streptococcus pyogenes serotype M18 (strain MGAS8232).